The following is a 140-amino-acid chain: General stress protein 26 (140 aa).

In Bacillus subtilis (strain 168), this protein is General stress protein 26 (ydaG).